Consider the following 272-residue polypeptide: Phosphoglycolate phosphatase (272 aa).

Catalysis depends on Asp19, which acts as the Nucleophile. Mg(2+) is bound by residues Asp19, Asp21, and Asp182.

This sequence belongs to the HAD-like hydrolase superfamily. CbbY/CbbZ/Gph/YieH family. The cofactor is Mg(2+).

The catalysed reaction is 2-phosphoglycolate + H2O = glycolate + phosphate. It functions in the pathway organic acid metabolism; glycolate biosynthesis; glycolate from 2-phosphoglycolate: step 1/1. Specifically catalyzes the dephosphorylation of 2-phosphoglycolate. Is involved in the dissimilation of the intracellular 2-phosphoglycolate formed during the DNA repair of 3'-phosphoglycolate ends, a major class of DNA lesions induced by oxidative stress. This is Phosphoglycolate phosphatase from Pseudomonas syringae pv. syringae (strain B728a).